Consider the following 612-residue polypeptide: tRNA(Met) cytidine acetyltransferase TmcA (612 aa).

Residues Gln-136, 161 to 170 (GRGKSTLLGQ), and Arg-284 each bind ATP. Positions 319–499 (KHASELEEAL…PAAIYALPLT (181 aa)) constitute an N-acetyltransferase domain. Residue 424 to 426 (IAV) coordinates acetyl-CoA.

Belongs to the RNA cytidine acetyltransferase family. TmcA subfamily.

It is found in the cytoplasm. It carries out the reaction cytidine(34) in elongator tRNA(Met) + acetyl-CoA + ATP + H2O = N(4)-acetylcytidine(34) in elongator tRNA(Met) + ADP + phosphate + CoA + H(+). In terms of biological role, catalyzes the formation of N(4)-acetylcytidine (ac(4)C) at the wobble position of tRNA(Met), by using acetyl-CoA as an acetyl donor and ATP (or GTP). The sequence is that of tRNA(Met) cytidine acetyltransferase TmcA from Idiomarina loihiensis (strain ATCC BAA-735 / DSM 15497 / L2-TR).